Reading from the N-terminus, the 366-residue chain is MIPRERILSVLSKYDESDVKIGTICSHSSLQIFNGARREGLRSVGIVLRENKPYYESFPRASPDIFIEVDSYGDLLSEETQEELISENVIMIPHGSFVEYVGSENILERFRVPMFGNRLTLYWEGDRRRQRKWLEDAGVPTPRIYRSPEDIDRPVIVKLHGAKGGKGYFKASSPEEFYEKFSELKERGLVGSLEDVVIEEFIVGVRFYPHFFFSPIEGENIADLEGGRLELLGIDRRLEVIDEIHRGLPDLMEDFMDYTVTGNIPVIVREKYLVDLLRDAVKIISSSRRLFYPGLIGPFCMEMIYNPSRGFITFEVSARIVAGTNLYTDGSPYSYYYYDEPMSMGRRIAREIKEAVKSGSLHKIIY.

Positions 27 and 96 each coordinate 5-amino-1-(5-phospho-beta-D-ribosyl)imidazole-4-carboxamide. One can recognise an ATP-grasp domain in the interval Arg-131–Lys-357. Residues Pro-154–Tyr-208 and Glu-239 contribute to the ATP site. A 5-amino-1-(5-phospho-beta-D-ribosyl)imidazole-4-carboxamide-binding site is contributed by Asn-263. Residues Glu-302 and Glu-315 each coordinate Mg(2+).

This sequence belongs to the phosphohexose mutase family. The cofactor is Mg(2+). Mn(2+) is required as a cofactor.

The catalysed reaction is 5-amino-1-(5-phospho-beta-D-ribosyl)imidazole-4-carboxamide + formate + ATP = 5-formamido-1-(5-phospho-D-ribosyl)imidazole-4-carboxamide + ADP + phosphate. The protein operates within purine metabolism; IMP biosynthesis via de novo pathway; 5-formamido-1-(5-phospho-D-ribosyl)imidazole-4-carboxamide from 5-amino-1-(5-phospho-D-ribosyl)imidazole-4-carboxamide (formate route): step 1/1. Functionally, catalyzes the ATP- and formate-dependent formylation of 5-aminoimidazole-4-carboxamide-1-beta-d-ribofuranosyl 5'-monophosphate (AICAR) to 5-formaminoimidazole-4-carboxamide-1-beta-d-ribofuranosyl 5'-monophosphate (FAICAR) in the absence of folates. The chain is 5-formaminoimidazole-4-carboxamide-1-(beta)-D-ribofuranosyl 5'-monophosphate synthetase from Korarchaeum cryptofilum (strain OPF8).